Here is a 575-residue protein sequence, read N- to C-terminus: Septation ring formation regulator EzrA (575 aa).

The Extracellular segment spans residues 1–8 (MSNGQLIY). A helical transmembrane segment spans residues 9 to 27 (LMVAIAVILVLAYVVAIFL). Topologically, residues 28 to 575 (RKRNEGRLEA…YEKTRETIRF (548 aa)) are cytoplasmic. 4 coiled-coil regions span residues 105-191 (LKAS…FVTL), 265-301 (LYEA…LYDI), 354-416 (VRRI…IEKD), and 456-526 (TASN…IQEA).

This sequence belongs to the EzrA family.

It is found in the cell membrane. Negative regulator of FtsZ ring formation; modulates the frequency and position of FtsZ ring formation. Inhibits FtsZ ring formation at polar sites. Interacts either with FtsZ or with one of its binding partners to promote depolymerization. This Streptococcus pneumoniae serotype 4 (strain ATCC BAA-334 / TIGR4) protein is Septation ring formation regulator EzrA.